A 342-amino-acid polypeptide reads, in one-letter code: L-lysine 2,3-aminomutase (342 aa).

Residues 106–329 (HKYHNRALLL…PKLAREIGGE (224 aa)) enclose the Radical SAM core domain. [4Fe-4S] cluster is bound by residues Cys-120, Cys-124, and Cys-127. Lys-332 bears the N6-(pyridoxal phosphate)lysine mark.

This sequence belongs to the radical SAM superfamily. KamA family. The cofactor is [4Fe-4S] cluster. It depends on pyridoxal 5'-phosphate as a cofactor.

The enzyme catalyses L-lysine = D-beta-lysine. With EpmA is involved in the beta-lysylation step of the post-translational modification of translation elongation factor P (EF-P) on 'Lys-34'. EpmB appears to act before EpmA. Displays lysine 2,3-aminomutase activity, producing (R)-beta-lysine from (S)-alpha-lysine (L-lysine). Cannot use (S)-ornithine or (R)-alpha-lysine as a substrate. This chain is L-lysine 2,3-aminomutase (epmB), found in Escherichia coli (strain K12).